We begin with the raw amino-acid sequence, 1183 residues long: SR-related and CTD-associated factor 4 (1183 aa).

Residues 1 to 139 (MDAVNAFNQE…PLLDMAAGTS (139 aa)) enclose the CID domain. N6-acetyllysine is present on lysine 49. A Phosphoserine modification is found at serine 154. Disordered stretches follow at residues 299 to 324 (VPVP…VQQP) and 348 to 561 (HHQV…QIKS). The segment covering 367–380 (APPPFPPMPQPGMP) has biased composition (pro residues). Positions 381–398 (QPGMAQPGLAQPGMAQPT) are enriched in low complexity. Positions 399–410 (MPQPGMPQPGMP) are enriched in pro residues. Low complexity predominate over residues 411 to 428 (QPGMAQPGLAQPGMAQPG). Residues 429-440 (MPQPAMPQPAMP) show a composition bias toward pro residues. A compositionally biased stretch (polar residues) spans 457–469 (PTFQSTFQPQNEP). Residues 488–498 (EVKRHVPESRK) show a composition bias toward basic and acidic residues. Over residues 499–536 (SRSRSPKRRRSRSGSRSRRSRHRRSRSRSRDRRRHSPR) the composition is skewed to basic residues. Positions 538-553 (RSQERRDREKERERRQ) are enriched in basic and acidic residues. An RRM domain is found at 569–643 (TTLWVGQLDK…KSIKIAWALN (75 aa)). Disordered regions lie at residues 691–722 (WKGI…IPKP), 800–858 (LPPG…SLPT), and 920–1183 (MPPH…EPPR). Serine 717 bears the Phosphoserine mark. Composition is skewed to pro residues over residues 800–823 (LPPG…PPIS) and 920–952 (MPPH…PPHG). The span at 1006-1020 (SPSQQPAPAQQQPPQ) shows a compositional bias: low complexity. Serine 1042 is modified (phosphoserine). Over residues 1047–1122 (VENDRERYGS…NRKEKHEVAD (76 aa)) the composition is skewed to basic and acidic residues. Polar residues predominate over residues 1136-1145 (QVGTIDTVSE).

Interacts with POLR2A; via C-terminal heptapeptide repeat domain (CTD) phosphorylated at 'Ser-2' and 'Ser-5'.

The protein localises to the nucleus. Functionally, anti-terminator protein required to prevent early mRNA termination during transcription. Together with SCAF8, acts by suppressing the use of early, alternative poly(A) sites, thereby preventing the accumulation of non-functional truncated proteins. Mechanistically, associates with the phosphorylated C-terminal heptapeptide repeat domain (CTD) of the largest RNA polymerase II subunit (POLR2A), and subsequently binds nascent RNA upstream of early polyadenylation sites to prevent premature mRNA transcript cleavage and polyadenylation. Independently of SCAF8, also acts as a suppressor of transcriptional readthrough. The sequence is that of SR-related and CTD-associated factor 4 from Mus musculus (Mouse).